We begin with the raw amino-acid sequence, 35 residues long: uncharacterized protein (35 aa).

Residues 14 to 34 (VVVLLAICGAMLLLRWAAMIW) traverse the membrane as a helical segment.

It localises to the membrane. This is an uncharacterized protein from Escherichia coli (strain K12).